We begin with the raw amino-acid sequence, 60 residues long: Large ribosomal subunit protein bL32 (60 aa).

The interval 1–23 (MAVPKRKKSKSRRNMHRSHHAIK) is disordered.

Belongs to the bacterial ribosomal protein bL32 family.

This is Large ribosomal subunit protein bL32 from Wolbachia sp. subsp. Brugia malayi (strain TRS).